The chain runs to 293 residues: Pantothenate synthetase (293 aa).

Residue Met-38–His-45 participates in ATP binding. The Proton donor role is filled by His-45. Gln-69 lines the (R)-pantoate pocket. Gln-69 lines the beta-alanine pocket. Gly-155–Asp-158 contributes to the ATP binding site. Gln-161 is a binding site for (R)-pantoate. Residue Gln-192–Arg-195 participates in ATP binding.

This sequence belongs to the pantothenate synthetase family. As to quaternary structure, homodimer.

The protein resides in the cytoplasm. It catalyses the reaction (R)-pantoate + beta-alanine + ATP = (R)-pantothenate + AMP + diphosphate + H(+). It participates in cofactor biosynthesis; (R)-pantothenate biosynthesis; (R)-pantothenate from (R)-pantoate and beta-alanine: step 1/1. Catalyzes the condensation of pantoate with beta-alanine in an ATP-dependent reaction via a pantoyl-adenylate intermediate. This Hyphomonas neptunium (strain ATCC 15444) protein is Pantothenate synthetase.